A 299-amino-acid polypeptide reads, in one-letter code: ATP phosphoribosyltransferase (299 aa).

Belongs to the ATP phosphoribosyltransferase family. Long subfamily. The cofactor is Mg(2+).

The protein localises to the cytoplasm. The enzyme catalyses 1-(5-phospho-beta-D-ribosyl)-ATP + diphosphate = 5-phospho-alpha-D-ribose 1-diphosphate + ATP. Its pathway is amino-acid biosynthesis; L-histidine biosynthesis; L-histidine from 5-phospho-alpha-D-ribose 1-diphosphate: step 1/9. Feedback inhibited by histidine. Functionally, catalyzes the condensation of ATP and 5-phosphoribose 1-diphosphate to form N'-(5'-phosphoribosyl)-ATP (PR-ATP). Has a crucial role in the pathway because the rate of histidine biosynthesis seems to be controlled primarily by regulation of HisG enzymatic activity. In Campylobacter jejuni subsp. doylei (strain ATCC BAA-1458 / RM4099 / 269.97), this protein is ATP phosphoribosyltransferase.